We begin with the raw amino-acid sequence, 393 residues long: GDP-4-keto-6-deoxy-D-mannose 3-dehydratase (393 aa).

Position 30–33 (30–33 (NMFT)) interacts with GDP-4-dehydro-alpha-D-rhamnose. Residues 53 to 73 (YSVMVSSGSTANLLMIAALFF) traverse the membrane as a helical segment. Residues 60–61 (GS), W92, E166, and S187 each bind pyridoxal 5'-phosphate. H192 (proton donor/acceptor) is an active-site residue. Position 219 (H219) interacts with L-glutamate. R223 lines the GDP-4-dehydro-alpha-D-rhamnose pocket. A pyridoxal 5'-phosphate-binding site is contributed by N252. R254 provides a ligand contact to L-glutamate. E333 provides a ligand contact to GDP-4-dehydro-alpha-D-rhamnose.

It belongs to the DegT/DnrJ/EryC1 family. In terms of assembly, homodimer. Pyridoxal 5'-phosphate serves as cofactor.

It localises to the cell membrane. It carries out the reaction GDP-4-dehydro-alpha-D-rhamnose + L-glutamate = GDP-4-dehydro-3,6-dideoxy-alpha-D-mannose + 2-oxoglutarate + NH4(+). It participates in nucleotide-sugar metabolism; GDP-L-colitose biosynthesis. In terms of biological role, involved in the biosynthesis of L-colitose, a 3,6-dideoxyhexose present in the O-antigen region of lipopolysaccharides (LPS), where it serves as an antigenic determinant and is vital for bacterial defense and survival. Catalyzes the removal of the C3'-hydroxyl group from GDP-4-keto-6-deoxy-D-mannose via a combined transamination-deoxygenation reaction. The catalysis is initiated by a transamination step in which pyridoxal 5'-phosphate (PLP) is converted to pyridoxamine 5'-phosphate (PMP) in the presence of L-glutamate. This coenzyme then forms a Schiff base with GDP-4-keto-6-deoxy-D-mannose and the resulting adduct undergoes a PMP-mediated beta-dehydration reaction to give a sugar enamine intermediate, which after tautomerization and hydrolysis to release ammonia yields GDP-4-keto-3,6-dideoxy-D-mannose as a product. The polypeptide is GDP-4-keto-6-deoxy-D-mannose 3-dehydratase (Yersinia pseudotuberculosis).